Reading from the N-terminus, the 806-residue chain is Phenylalanine--tRNA ligase beta subunit (806 aa).

The tRNA-binding domain occupies 40–155 (NKGVKGVVVG…SDAEVGADAL (116 aa)). The 76-residue stretch at 409-484 (VQERTVSVTA…RLYGYDHIPV (76 aa)) folds into the B5 domain. Mg(2+)-binding residues include Asp-462, Asp-468, Glu-471, and Glu-472. Positions 712-805 (PRFPSMTRDM…VEEKFGAELR (94 aa)) constitute an FDX-ACB domain.

This sequence belongs to the phenylalanyl-tRNA synthetase beta subunit family. Type 1 subfamily. As to quaternary structure, tetramer of two alpha and two beta subunits. Requires Mg(2+) as cofactor.

It is found in the cytoplasm. The catalysed reaction is tRNA(Phe) + L-phenylalanine + ATP = L-phenylalanyl-tRNA(Phe) + AMP + diphosphate + H(+). In Bacillus cereus (strain ATCC 14579 / DSM 31 / CCUG 7414 / JCM 2152 / NBRC 15305 / NCIMB 9373 / NCTC 2599 / NRRL B-3711), this protein is Phenylalanine--tRNA ligase beta subunit.